We begin with the raw amino-acid sequence, 498 residues long: Glycerol kinase (498 aa).

Threonine 12 provides a ligand contact to ADP. ATP contacts are provided by threonine 12, threonine 13, and serine 14. Threonine 12 provides a ligand contact to sn-glycerol 3-phosphate. Arginine 16 is an ADP binding site. Positions 82, 83, and 134 each coordinate sn-glycerol 3-phosphate. Positions 82, 83, and 134 each coordinate glycerol. Phosphohistidine; by HPr is present on histidine 230. Residue aspartate 244 participates in sn-glycerol 3-phosphate binding. Glycerol-binding residues include aspartate 244 and glutamine 245. The ADP site is built by threonine 266 and glycine 309. 4 residues coordinate ATP: threonine 266, glycine 309, glutamine 313, and glycine 410. ADP contacts are provided by glycine 410 and asparagine 414.

The protein belongs to the FGGY kinase family. In terms of assembly, homotetramer and homodimer (in equilibrium). Post-translationally, the phosphoenolpyruvate-dependent sugar phosphotransferase system (PTS), including enzyme I, and histidine-containing protein (HPr) are required for the phosphorylation, which leads to the activation of the enzyme.

The catalysed reaction is glycerol + ATP = sn-glycerol 3-phosphate + ADP + H(+). It participates in polyol metabolism; glycerol degradation via glycerol kinase pathway; sn-glycerol 3-phosphate from glycerol: step 1/1. Activated by phosphorylation and inhibited by fructose 1,6-bisphosphate (FBP). In terms of biological role, key enzyme in the regulation of glycerol uptake and metabolism. Catalyzes the phosphorylation of glycerol to yield sn-glycerol 3-phosphate. The chain is Glycerol kinase from Staphylococcus aureus (strain MRSA252).